Consider the following 472-residue polypeptide: Serine incorporator 3 (472 aa).

Residues 1–95 (MGAVLGVFSL…KECDVLVRYK (95 aa)) are Extracellular-facing. An N-linked (GlcNAc...) asparagine glycan is attached at Asn-34. A helical transmembrane segment spans residues 96–116 (AVYRISFALAVFFFAFSLLML). Topologically, residues 117–131 (NVKTSKDPRAAIHNG) are cytoplasmic. Residues 132–152 (FWFFKIAAIVGVMVGSFYIPG) traverse the membrane as a helical segment. Topologically, residues 153–158 (GHFNTA) are extracellular. Residues 159–179 (WFVIGMVGAAFFILIQLVLLV) traverse the membrane as a helical segment. Topologically, residues 180–202 (DFAHSWNESWVNRMEEGNPKCWY) are cytoplasmic. The helical transmembrane segment at 203–223 (AALLSVTSLFYILSIIFAGLL) threads the bilayer. The Extracellular segment spans residues 224 to 238 (YTYYTKPDGCTENKF). The helical transmembrane segment at 239–259 (FISFNLILCVVISVLSIHPKI) threads the bilayer. The Cytoplasmic segment spans residues 260 to 328 (QEHQPRSGLL…APTPAVPLQS (69 aa)). Residues 329 to 349 (GPSLNKENFIGLLVFVLSLSY) form a helical membrane-spanning segment. The Extracellular segment spans residues 350–405 (SSIRNSSNSQVSKLTLSGSDSVILRDTAANGASDEEDGRPRRAVDNEREGVQYNYS). The N-linked (GlcNAc...) asparagine glycan is linked to Asn-354. Position 370 is a phosphoserine (Ser-370). Asn-403 is a glycosylation site (N-linked (GlcNAc...) asparagine). Residues 406–426 (MFHLMLCSASLYIMMTLTNWY) form a helical membrane-spanning segment. The Cytoplasmic segment spans residues 427–445 (SPDANFQSMTSKWPAVWVK). A helical membrane pass occupies residues 446–466 (ISSSWVCLLLYVWTLVAPLVL). Residues 467 to 472 (TNRDFS) are Extracellular-facing.

Belongs to the TDE1 family. In terms of processing, N-glycosylated.

It is found in the cell membrane. The protein localises to the golgi apparatus membrane. The catalysed reaction is a 1,2-diacyl-sn-glycero-3-phospho-L-serine(in) = a 1,2-diacyl-sn-glycero-3-phospho-L-serine(out). The enzyme catalyses a 1,2-diacyl-sn-glycero-3-phosphocholine(in) = a 1,2-diacyl-sn-glycero-3-phosphocholine(out). It catalyses the reaction a 1,2-diacyl-sn-glycero-3-phosphoethanolamine(in) = a 1,2-diacyl-sn-glycero-3-phosphoethanolamine(out). Its function is as follows. Restriction factor required to restrict infectivity of gammaretroviruses: acts by inhibiting an early step of viral infection. Impairs the penetration of the viral particle into the cytoplasm. Non-ATP-dependent, non-specific lipid transporter for phosphatidylserine, phosphatidylcholine, and phosphatidylethanolamine. Functions as a scramblase that flips lipids in both directions across the membrane. Phospholipid scrambling results in gammaretroviral surface exposure of phosphatidylserine and loss of membrane asymmetry, which leads to loss of infectivity. The polypeptide is Serine incorporator 3 (SERINC3) (Bos taurus (Bovine)).